The primary structure comprises 339 residues: Oncoprotein MEQ (339 aa).

The disordered stretch occupies residues methionine 1–aspartate 80. Serine 42 carries the phosphoserine; by host CDK2 modification. The basic motif stretch occupies residues lysine 57–lysine 84. The bZIP domain maps to lysine 57–histidine 120. The span at leucine 60–lysine 77 shows a compositional bias: basic residues. Positions arginine 62–glutamine 78 match the Nuclear localization signal motif. Residues leucine 85–leucine 113 form a leucine-zipper region. The interval histidine 120 to proline 339 is transactivation domain. Residues proline 145–proline 160 show a composition bias toward pro residues. The disordered stretch occupies residues proline 145 to isoleucine 172.

Belongs to the bZIP family. Jun subfamily. Homodimer. Interacts with host JUN; this interaction allows MEQ to engage in host cell processes by disguising itself as a cellular JUN. Phosphorylated by host CDK2; this phosphorylation greatly reduces the DNA binding activity of MEQ.

It is found in the host nucleus. It localises to the host nucleolus. Its function is as follows. Functions as a DNA-binding transcription factor. Promotes transformation, host cell growth, host cell-cycle progression through G1/S phase, and possesses antiapoptotic activity. Forms functional heterodimers with host JUN. These heterodimers bind with high affinity DNA sequences called MEQ-responsive elements MERE I (TGACA/GTCA), while MEQ homodimers bind a second type of sites termed MERE II (ACACA). Both homo and heterodimerization of MEQ are required for oncogenesis. This is Oncoprotein MEQ (MDV005) from Gallid herpesvirus 2 (strain Chicken/Md5/ATCC VR-987) (GaHV-2).